The chain runs to 460 residues: 2-methylcitrate synthase, mitochondrial (460 aa).

Residues 1–24 (MALPLRTARHASRLAQTIGRRGYA) constitute a mitochondrion transit peptide. Arginine 69 and lysine 187 together coordinate CoA. Histidine 264 is a binding site for oxaloacetate. CoA is bound at residue leucine 299. The active site involves histidine 300. Residues valine 341, glycine 343, and tyrosine 344 each contribute to the CoA site. Residues histidine 346 and arginine 355 each contribute to the oxaloacetate site. The active site involves histidine 346. Residues threonine 395, lysine 396, and asparagine 401 each contribute to the CoA site. Residue aspartate 403 is part of the active site. Positions 429 and 449 each coordinate oxaloacetate.

It belongs to the citrate synthase family. In terms of assembly, homodimer.

It localises to the mitochondrion matrix. It catalyses the reaction propanoyl-CoA + oxaloacetate + H2O = (2S,3S)-2-methylcitrate + CoA + H(+). The enzyme catalyses oxaloacetate + acetyl-CoA + H2O = citrate + CoA + H(+). The protein operates within organic acid metabolism; propanoate degradation. With respect to regulation, partially inhibited by ATP. In terms of biological role, catalyzes the synthesis of (2S,3S)-2-methylcitrate from propionyl-CoA and oxaloacetate and also from acetyl-CoA and oxaloacetate with a greater efficiency. Also has citrate synthase activity and can substitute for the loss of citA activity. In Emericella nidulans (strain FGSC A4 / ATCC 38163 / CBS 112.46 / NRRL 194 / M139) (Aspergillus nidulans), this protein is 2-methylcitrate synthase, mitochondrial.